A 60-amino-acid polypeptide reads, in one-letter code: Large ribosomal subunit protein bL32 (60 aa).

The protein belongs to the bacterial ribosomal protein bL32 family.

The chain is Large ribosomal subunit protein bL32 from Borrelia hermsii (strain HS1 / DAH).